A 729-amino-acid chain; its full sequence is Receptor-like protein 2 (729 aa).

Residues 1-44 (MRSKAKGLVRPLITKPVQPLSSHMHLFLLCILFLSALFLTLSEA) form the signal peptide. Positions 45–82 (VCNLQDRESLIWFSGNVSSSVSPLNWNLSIDCCSWEGI) are N-cap. Topologically, residues 45 to 707 (VCNLQDRESL…AKENDELNRT (663 aa)) are extracellular. N-linked (GlcNAc...) asparagine glycans are attached at residues N60 and N71. 20 LRR repeats span residues 89–113 (DSHV…VQNI), 114–137 (HRLS…FFST), 139–163 (DQLM…AFGN), 168–193 (FFSI…VYLQ), 195–219 (TINL…MCRS), 220–244 (SPQL…LGRC), 245–268 (LRLT…IYNL), 269–292 (SELE…ITRL), 293–316 (RKLT…IGNL), 317–340 (SSLR…LANC), 342–364 (KLVK…EFSQ), 365–389 (LQSL…IFSC), 391–413 (SLTA…VLEL), 414–437 (ESLS…SILQ), 439–464 (CRKL…DFLS), 468–492 (FPKL…LINL), 493–515 (NKVE…WLGT), 516–540 (LPDL…LFQL), 542–560 (ALMS…PIFL), and 561–584 (NPNN…IYIR). N-linked (GlcNAc...) asparagine glycans are attached at residues N145 and N163. N-linked (GlcNAc...) asparagine glycans are attached at residues N202 and N205. N256, N267, N288, N315, N330, and N339 each carry an N-linked (GlcNAc...) asparagine glycan. The N-linked (GlcNAc...) asparagine glycan is linked to N375. The N-linked (GlcNAc...) asparagine glycan is linked to N428. N-linked (GlcNAc...) asparagine glycosylation is found at N564, N587, N611, N622, N635, N657, and N705. LRR repeat units lie at residues 599-623 (LKVL…LSNL), 624-647 (TNLE…LTNL), and 649-672 (FLSY…QFDT). A C-cap/acidic domain region spans residues 690 to 707 (LTSCKPTRAKENDELNRT). The chain crosses the membrane as a helical span at residues 708-728 (FLMGIAIGYFLSFVSILVVRA). A topological domain (cytoplasmic) is located at residue W729.

It belongs to the RLP family.

It is found in the cell membrane. In terms of biological role, involved in the perception of CLV3 and CLV3-like peptides, that act as extracellular signals regulating meristems maintenance. The sequence is that of Receptor-like protein 2 from Arabidopsis thaliana (Mouse-ear cress).